Consider the following 180-residue polypeptide: Large ribosomal subunit protein uL6 (180 aa).

The protein belongs to the universal ribosomal protein uL6 family. Part of the 50S ribosomal subunit.

Functionally, this protein binds to the 23S rRNA, and is important in its secondary structure. It is located near the subunit interface in the base of the L7/L12 stalk, and near the tRNA binding site of the peptidyltransferase center. This is Large ribosomal subunit protein uL6 from Thermodesulfovibrio yellowstonii (strain ATCC 51303 / DSM 11347 / YP87).